Here is a 141-residue protein sequence, read N- to C-terminus: HTH-type transcriptional repressor NsrR (141 aa).

Positions 2–129 constitute an HTH rrf2-type domain; sequence QLTSFTDYGL…DNYTLADMVQ (128 aa). Positions 28–51 form a DNA-binding region, H-T-H motif; the sequence is ISQVTEVYGVSRNHMVKIINQLSR. [2Fe-2S] cluster-binding residues include C91, C96, and C102.

The cofactor is [2Fe-2S] cluster.

Nitric oxide-sensitive repressor of genes involved in protecting the cell against nitrosative stress. May require iron for activity. The chain is HTH-type transcriptional repressor NsrR from Yersinia enterocolitica serotype O:8 / biotype 1B (strain NCTC 13174 / 8081).